The primary structure comprises 187 residues: Inner membrane-spanning protein YciB (187 aa).

The next 5 membrane-spanning stretches (helical) occupy residues 25-45 (ATGA…ALYK), 50-70 (MQLI…FLHD), 76-96 (WKVT…HVMG), 118-138 (INWA…YVAY), and 148-168 (FKVF…GGYI).

It belongs to the YciB family.

It is found in the cell inner membrane. Functionally, plays a role in cell envelope biogenesis, maintenance of cell envelope integrity and membrane homeostasis. The protein is Inner membrane-spanning protein YciB of Vibrio vulnificus (strain CMCP6).